The chain runs to 339 residues: AT-hook motif nuclear-localized protein 26 (339 aa).

A compositionally biased stretch (polar residues) spans 1–12 (MDPVQSHGSQSS). Disordered regions lie at residues 1–132 (MDPV…NKPK) and 273–339 (MQTP…RPPY). Residues 24 to 45 (LHLQQQQQHQQQHQQQQQQQFF) are compositionally biased toward low complexity. Over residues 82–93 (NMDNIANTNSGS) the composition is skewed to polar residues. The span at 102-113 (GGEGGSGGGGSG) shows a compositional bias: gly residues. The segment at residues 118-130 (RRPRGRPAGSKNK) is a DNA-binding region (a.T hook). In terms of domain architecture, PPC spans 142–279 (ANALRTHVME…EDEMQTPVQG (138 aa)). The segment covering 278–291 (QGGGGGGGGGGGMG) has biased composition (gly residues). A compositionally biased stretch (low complexity) spans 292–310 (SPPMMGQQQAMAAMAAAQG).

It is found in the nucleus. Functionally, transcription factor that specifically binds AT-rich DNA sequences related to the nuclear matrix attachment regions (MARs). The polypeptide is AT-hook motif nuclear-localized protein 26 (Arabidopsis thaliana (Mouse-ear cress)).